The following is a 109-amino-acid chain: MFGKGGMGNLMKQAQQMQERMQKMQEQLAQMEVVGEAGAGMVKVTMAGSHSVRRIEIDPSLMEDDKEMLEDLVAAAVNDAVRRVEEQNKSKMGELTGGMQLPPGFKMPF.

Disordered stretches follow at residues 1 to 23 (MFGKGGMGNLMKQAQQMQERMQK) and 88 to 109 (NKSKMGELTGGMQLPPGFKMPF). Residues 11 to 23 (MKQAQQMQERMQK) are compositionally biased toward low complexity.

The protein belongs to the YbaB/EbfC family. As to quaternary structure, homodimer.

Its subcellular location is the cytoplasm. The protein localises to the nucleoid. Its function is as follows. Binds to DNA and alters its conformation. May be involved in regulation of gene expression, nucleoid organization and DNA protection. The polypeptide is Nucleoid-associated protein AHA_2212 (Aeromonas hydrophila subsp. hydrophila (strain ATCC 7966 / DSM 30187 / BCRC 13018 / CCUG 14551 / JCM 1027 / KCTC 2358 / NCIMB 9240 / NCTC 8049)).